The sequence spans 463 residues: Putative protein FAM90A2P (463 aa).

Disordered regions lie at residues 1-42 (MTAR…DPRL), 67-115 (ALVP…PQRK), 150-295 (MPVH…PAQA), and 326-365 (ALENLQPPPAATELGPSTSPQMGRRTPAQVPGVDRQPPHS). Composition is skewed to basic and acidic residues over residues 74–83 (GKKEGKENLK), 97–114 (NKDKGEKEERPRQQDPQR), and 159–170 (PCVDPELADRSA). The segment covering 180–198 (LASLSPLRKASLRSSSSLG) has biased composition (low complexity).

It belongs to the FAM90 family.

In Homo sapiens (Human), this protein is Putative protein FAM90A2P (FAM90A2P).